The chain runs to 185 residues: Ribosome-recycling factor (185 aa).

Residues 138 to 179 (TLKRQEKNGDITEDEQRSLEKQVQKVTDDATKEIDKLADQKS) are compositionally biased toward basic and acidic residues. A disordered region spans residues 138 to 185 (TLKRQEKNGDITEDEQRSLEKQVQKVTDDATKEIDKLADQKSQEITQG).

Belongs to the RRF family.

It localises to the cytoplasm. Its function is as follows. Responsible for the release of ribosomes from messenger RNA at the termination of protein biosynthesis. May increase the efficiency of translation by recycling ribosomes from one round of translation to another. The protein is Ribosome-recycling factor of Lactobacillus gasseri (strain ATCC 33323 / DSM 20243 / BCRC 14619 / CIP 102991 / JCM 1131 / KCTC 3163 / NCIMB 11718 / NCTC 13722 / AM63).